A 500-amino-acid chain; its full sequence is Glycerol kinase (500 aa).

Residue T13 coordinates ADP. Residues T13, T14, and S15 each coordinate ATP. T13 is a binding site for sn-glycerol 3-phosphate. R17 provides a ligand contact to ADP. Sn-glycerol 3-phosphate is bound by residues R83, E84, Y135, and D245. 5 residues coordinate glycerol: R83, E84, Y135, D245, and Q246. Residues T267 and G310 each coordinate ADP. The ATP site is built by T267, G310, Q314, and G411. Residues G411 and N415 each coordinate ADP.

The protein belongs to the FGGY kinase family. As to quaternary structure, homotetramer and homodimer (in equilibrium).

It catalyses the reaction glycerol + ATP = sn-glycerol 3-phosphate + ADP + H(+). Its pathway is polyol metabolism; glycerol degradation via glycerol kinase pathway; sn-glycerol 3-phosphate from glycerol: step 1/1. Activated by phosphorylation and inhibited by fructose 1,6-bisphosphate (FBP). In terms of biological role, key enzyme in the regulation of glycerol uptake and metabolism. Catalyzes the phosphorylation of glycerol to yield sn-glycerol 3-phosphate. In Carboxydothermus hydrogenoformans (strain ATCC BAA-161 / DSM 6008 / Z-2901), this protein is Glycerol kinase.